The primary structure comprises 271 residues: Dirigent protein 17 (271 aa).

Residues 1-12 are compositionally biased toward polar residues; the sequence is MEDTGSIKQEAQ. Positions 1-22 are disordered; the sequence is MEDTGSIKQEAQSHPPGIFEIP. N-linked (GlcNAc...) asparagine glycosylation occurs at Asn255.

Belongs to the plant dirigent protein family. In terms of assembly, homodimer.

The protein localises to the secreted. It localises to the extracellular space. It is found in the apoplast. Its function is as follows. Dirigent proteins impart stereoselectivity on the phenoxy radical-coupling reaction, yielding optically active lignans from two molecules of coniferyl alcohol in the biosynthesis of lignans, flavonolignans, and alkaloids and thus plays a central role in plant secondary metabolism. The protein is Dirigent protein 17 (DIR17) of Arabidopsis thaliana (Mouse-ear cress).